We begin with the raw amino-acid sequence, 438 residues long: DNA primase DnaG (438 aa).

In terms of domain architecture, Toprim spans 171–245 (DAILVVEGRA…DIDYVARAPE (75 aa)). Residues Glu177, Asp219, and Asp221 each contribute to the Mg(2+) site.

Belongs to the archaeal DnaG primase family. As to quaternary structure, forms a ternary complex with MCM helicase and DNA. Component of the archaeal exosome complex. It depends on Mg(2+) as a cofactor.

It catalyses the reaction ssDNA + n NTP = ssDNA/pppN(pN)n-1 hybrid + (n-1) diphosphate.. RNA polymerase that catalyzes the synthesis of short RNA molecules used as primers for DNA polymerase during DNA replication. Also part of the exosome, which is a complex involved in RNA degradation. Acts as a poly(A)-binding protein that enhances the interaction between heteromeric, adenine-rich transcripts and the exosome. This is DNA primase DnaG from Methanothrix thermoacetophila (strain DSM 6194 / JCM 14653 / NBRC 101360 / PT) (Methanosaeta thermophila).